Consider the following 446-residue polypeptide: SPARC-related modular calcium-binding protein 2 (446 aa).

A signal peptide spans 1–21 (MLLPQLCWLPLLAGLLPPVPA). One can recognise a Kazal-like domain in the interval 34-86 (QDKDKDCSLDCAGSPQKPLCASDGRTFLSRCEFQRAKCKDPQLEIAYRGNCKD). 6 disulfide bridges follow: Cys40–Cys71, Cys44–Cys64, Cys53–Cys84, Cys90–Cys113, Cys124–Cys131, and Cys133–Cys153. The region spanning 87–153 (VSRCVAERKY…TAVAHKTPRC (67 aa)) is the Thyroglobulin type-1 1 domain. The disordered stretch occupies residues 147–228 (AHKTPRCPGS…EHQSALEEAK (82 aa)). Residues 161–172 (LPQREGTGKTDD) are compositionally biased toward basic and acidic residues. An N-linked (GlcNAc...) asparagine glycan is attached at Asn206. The segment covering 206 to 216 (NKTNKNSVSSC) has biased composition (polar residues). Residues 213 to 281 (VSSCDQEHQS…TSTRYEQPKC (69 aa)) form the Thyroglobulin type-1 2 domain. Cystine bridges form between Cys216/Cys240, Cys251/Cys258, and Cys260/Cys281. The segment covering 217–228 (DQEHQSALEEAK) has biased composition (basic and acidic residues). 2 consecutive EF-hand domains span residues 347-382 (LEER…LRKK) and 384-419 (KPKK…AKED). Ca(2+) contacts are provided by Asp360, Asn362, Ser364, Asp366, Glu371, Asp397, Asn399, Asp401, Ser403, and Glu408. Asn362 is a glycosylation site (N-linked (GlcNAc...) asparagine). The disordered stretch occupies residues 416–446 (AKEDGKADTKKRHTPRGHAESTSNRQPRKQG).

Binds various proteins from the extracellular matrix.

It localises to the secreted. It is found in the extracellular space. The protein resides in the extracellular matrix. Its subcellular location is the basement membrane. Promotes matrix assembly and cell adhesiveness. Can stimulate endothelial cell proliferation, migration, as well as angiogenesis. This chain is SPARC-related modular calcium-binding protein 2 (SMOC2), found in Homo sapiens (Human).